Here is a 329-residue protein sequence, read N- to C-terminus: UDP-N-acetylenolpyruvoylglucosamine reductase (329 aa).

Positions 28–192 (RVGGPADLLC…ARVEVRLRPG (165 aa)) constitute an FAD-binding PCMH-type domain. The active site involves Arg-172. The disordered stretch occupies residues 204-225 (DRERRRATQPLDRPTFGSTFTN). Ser-221 functions as the Proton donor in the catalytic mechanism. Glu-291 is an active-site residue. The disordered stretch occupies residues 303–329 (LAGLDGHAADGGGPGAASGGARPREAT). A compositionally biased stretch (gly residues) spans 311–320 (ADGGGPGAAS).

Belongs to the MurB family. It depends on FAD as a cofactor.

Its subcellular location is the cytoplasm. The enzyme catalyses UDP-N-acetyl-alpha-D-muramate + NADP(+) = UDP-N-acetyl-3-O-(1-carboxyvinyl)-alpha-D-glucosamine + NADPH + H(+). Its pathway is cell wall biogenesis; peptidoglycan biosynthesis. In terms of biological role, cell wall formation. The chain is UDP-N-acetylenolpyruvoylglucosamine reductase from Anaeromyxobacter dehalogenans (strain 2CP-C).